Consider the following 1030-residue polypeptide: F-box/WD repeat-containing protein 10 (1030 aa).

Residues 280–329 (RDFIRDLPLHLSKYILRMLDKHSLNRCIFVSQHWATLAQQVKVDQSMHSF) form the F-box domain. WD repeat units lie at residues 466-505 (GHAGSVRALFLSEEDNILLSGSYDLSIRYWDVKTGACVRI), 508-547 (GHQGTITCLDVYKNRLVSGAKDGQVKEWDIETGKCLKTFK), 549-584 (KDPILAAKISETYIVSSCERGIVKVWHVVTAQLQKT), 587-624 (GHEGAVKCLFFNEWHLVSGGADGLVMAWSMVGKYERCL), and 626-667 (AFKH…KVIK). Residues 709–773 (KNKVKKSKDK…LSSDDMETPV (65 aa)) are disordered. Positions 716-733 (KDKEEEREETSLGDEHSR) are enriched in basic and acidic residues. A compositionally biased stretch (polar residues) spans 734–749 (STIQGHSLKDSVSSKQ). The stretch at 963 to 992 (FMLMTVKEEKEFAEAKMKEYEASVSTKEVD) forms a coiled coil.

Its function is as follows. Probable substrate-recognition component of a SCF (SKP1-CUL1-F-box protein)-type E3 ubiquitin ligase complex which mediates the ubiquitination and subsequent proteasomal degradation of target proteins. Overexpression is leading to degradation of CBX5 and CBX1. This is F-box/WD repeat-containing protein 10 (Fbxw10) from Mus musculus (Mouse).